The chain runs to 453 residues: MITLKEALKYSKEELENLKKELNEKAKKEKKIGAYIEQFLDKDLSVSGEGVPVAIKDNISVKGWELTSASKILQGYIAPYDASVIVNLKANGFSPFGRCNMDEFAMGSSTASSYYGKTLNPLNFERVPGGSSGGSAAAVAGGLALASLGSDTGGSVRQPAAFCGCVGFKPSYGRVSRYGLASYSSSLDQIGVLTQNVEDAAILYDAIAGYDKMDSTSANIEFIKTAPNLNVNKKLKIAVIENYVNDADSEVKNALLKTIDMLKANGHEIVYKNLLDSKFDIAAYYIIATAEASANLSRYDGVRYGKRSENIQNLKEMYVNTRSEGFGEEVKRRILLGTFVLSSGYYDAYYIKAQKARAFIKAKYEEILQDCDLIFMPVTPTTAFKFDTQKSPMQTYLEDVYTISVNLAGLGGISVPVAKDKEELNISAQLICKAYDEQTLLDGALSLEQMIKH.

Residues lysine 56 and serine 131 each act as charge relay system in the active site. The active-site Acyl-ester intermediate is the serine 155.

This sequence belongs to the amidase family. GatA subfamily. In terms of assembly, heterotrimer of A, B and C subunits.

It catalyses the reaction L-glutamyl-tRNA(Gln) + L-glutamine + ATP + H2O = L-glutaminyl-tRNA(Gln) + L-glutamate + ADP + phosphate + H(+). Allows the formation of correctly charged Gln-tRNA(Gln) through the transamidation of misacylated Glu-tRNA(Gln) in organisms which lack glutaminyl-tRNA synthetase. The reaction takes place in the presence of glutamine and ATP through an activated gamma-phospho-Glu-tRNA(Gln). The polypeptide is Glutamyl-tRNA(Gln) amidotransferase subunit A (Campylobacter jejuni subsp. jejuni serotype O:6 (strain 81116 / NCTC 11828)).